Here is a 250-residue protein sequence, read N- to C-terminus: Glutamate racemase (250 aa).

Substrate is bound by residues 7–8 (DS) and 39–40 (YG). C70 serves as the catalytic Proton donor/acceptor. Substrate is bound at residue 71 to 72 (NT). C180 (proton donor/acceptor) is an active-site residue. 181-182 (TH) is a binding site for substrate.

Belongs to the aspartate/glutamate racemases family.

The enzyme catalyses L-glutamate = D-glutamate. The protein operates within cell wall biogenesis; peptidoglycan biosynthesis. Provides the (R)-glutamate required for cell wall biosynthesis. This chain is Glutamate racemase, found in Campylobacter jejuni subsp. jejuni serotype O:2 (strain ATCC 700819 / NCTC 11168).